Here is a 355-residue protein sequence, read N- to C-terminus: UDP-N-acetylglucosamine--N-acetylmuramyl-(pentapeptide) pyrophosphoryl-undecaprenol N-acetylglucosamine transferase (355 aa).

Residues 15–17 (TGG), Asn-127, Arg-163, Ser-191, Ile-244, 263–268 (ALTVSE), and Gln-288 each bind UDP-N-acetyl-alpha-D-glucosamine.

The protein belongs to the glycosyltransferase 28 family. MurG subfamily.

It is found in the cell inner membrane. It catalyses the reaction di-trans,octa-cis-undecaprenyl diphospho-N-acetyl-alpha-D-muramoyl-L-alanyl-D-glutamyl-meso-2,6-diaminopimeloyl-D-alanyl-D-alanine + UDP-N-acetyl-alpha-D-glucosamine = di-trans,octa-cis-undecaprenyl diphospho-[N-acetyl-alpha-D-glucosaminyl-(1-&gt;4)]-N-acetyl-alpha-D-muramoyl-L-alanyl-D-glutamyl-meso-2,6-diaminopimeloyl-D-alanyl-D-alanine + UDP + H(+). Its pathway is cell wall biogenesis; peptidoglycan biosynthesis. Its function is as follows. Cell wall formation. Catalyzes the transfer of a GlcNAc subunit on undecaprenyl-pyrophosphoryl-MurNAc-pentapeptide (lipid intermediate I) to form undecaprenyl-pyrophosphoryl-MurNAc-(pentapeptide)GlcNAc (lipid intermediate II). This chain is UDP-N-acetylglucosamine--N-acetylmuramyl-(pentapeptide) pyrophosphoryl-undecaprenol N-acetylglucosamine transferase, found in Escherichia coli (strain K12 / MC4100 / BW2952).